The sequence spans 236 residues: Venom metalloproteinase antarease-like TfasMP_A (236 aa).

A Peptidase M12B domain is found at 4 to 232; it reads IVVEYYIVTD…KPAASCIFEQ (229 aa). His161 is a binding site for Zn(2+). Glu162 is an active-site residue. Zn(2+) is bound by residues His165 and His171.

This sequence belongs to the venom metalloproteinase (M12B) family. The cofactor is Zn(2+). Contains several disulfide bonds. Expressed by the venom gland.

It is found in the secreted. With respect to regulation, inhibited by EDTA. Functionally, acts as a metalloprotease. Penetrates intact tissue and specifically cleaves the vesicle-associated membrane protein 2 (VAMP2) (part of the SNARE complex) involved in pancreatic secretion, thus disrupting the normal vesicular traffic. This is Venom metalloproteinase antarease-like TfasMP_A from Tityus fasciolatus (Central Brazilian scorpion).